Here is a 156-residue protein sequence, read N- to C-terminus: Small ribosomal subunit protein uS7 (156 aa).

It belongs to the universal ribosomal protein uS7 family. As to quaternary structure, part of the 30S ribosomal subunit. Contacts proteins S9 and S11.

Functionally, one of the primary rRNA binding proteins, it binds directly to 16S rRNA where it nucleates assembly of the head domain of the 30S subunit. Is located at the subunit interface close to the decoding center, probably blocks exit of the E-site tRNA. The sequence is that of Small ribosomal subunit protein uS7 from Corynebacterium jeikeium (strain K411).